The following is a 133-amino-acid chain: ATP synthase epsilon chain (133 aa).

This sequence belongs to the ATPase epsilon chain family. In terms of assembly, F-type ATPases have 2 components, CF(1) - the catalytic core - and CF(0) - the membrane proton channel. CF(1) has five subunits: alpha(3), beta(3), gamma(1), delta(1), epsilon(1). CF(0) has three main subunits: a, b and c.

The protein resides in the cell membrane. Functionally, produces ATP from ADP in the presence of a proton gradient across the membrane. This chain is ATP synthase epsilon chain (atpC), found in Alkalihalophilus pseudofirmus (strain ATCC BAA-2126 / JCM 17055 / OF4) (Bacillus pseudofirmus).